The following is a 2594-amino-acid chain: Immunoglobulin superfamily member 10 (2594 aa).

An N-terminal signal peptide occupies residues 1–25 (MQKRGREVSCLLISLTAICLVVTPG). Residues 29-56 (CPRRCACYVPTEVHCTFRYLTSIPDGIP) form the LRRNT domain. 6 LRR repeats span residues 58-79 (NVER…DFSG), 82-103 (RLEL…TFSG), 106-127 (SLQV…TLYG), 130-151 (SLTR…AFYG), 154-175 (LLRL…TFVS), and 186-207 (FIKY…MVSS). In terms of domain architecture, LRRCT spans 219 to 281 (NPWTCDCHLK…VPSGSFLCTK (63 aa)). Asparagine 439 carries N-linked (GlcNAc...) asparagine glycosylation. Ig-like C2-type domains lie at 461-567 (PKAE…YRIT) and 571-661 (PYVE…FQVS). Cystine bridges form between cysteine 497–cysteine 551 and cysteine 595–cysteine 645. Asparagine 627 is a glycosylation site (N-linked (GlcNAc...) asparagine). The segment covering 670–685 (IEHDRDIDGSGLEEPK) has biased composition (basic and acidic residues). Disordered stretches follow at residues 670 to 725 (IEHD…RDLT) and 963 to 1008 (VSSN…GRER). The span at 715-725 (IHKKNKHRDLT) shows a compositional bias: basic residues. Positions 972–984 (TTKDPGFSKRPSD) are enriched in basic and acidic residues. The span at 985 to 1003 (SHTTAPSLFQTPRNNSTGN) shows a compositional bias: polar residues. Asparagine 1044 is a glycosylation site (N-linked (GlcNAc...) asparagine). 3 disordered regions span residues 1228 to 1251 (TATK…PSTT), 1333 to 1364 (VRSK…GYST), and 1428 to 1457 (SQES…PSPP). The span at 1333-1342 (VRSKKAKDQT) shows a compositional bias: basic and acidic residues. Residues 1355–1364 (TPRQISGYST) are compositionally biased toward polar residues. Ig-like C2-type domains are found at residues 1619 to 1710 (PRII…VTLS), 1715 to 1807 (PARI…VKIQ), 1812 to 1901 (PPVI…RRVV), 1912 to 2005 (PRIE…VRLR), 2008 to 2106 (PAKI…VHLT), 2112 to 2200 (PRIR…YKLD), 2205 to 2302 (PPLI…LKVL), 2308 to 2398 (PTFR…ILLE), 2403 to 2493 (PVIL…VPVT), and 2499 to 2592 (PRII…TYIQ). 3 disulfide bridges follow: cysteine 1641–cysteine 1694, cysteine 1738–cysteine 1791, and cysteine 1835–cysteine 1888. Residues 1658–1681 (SGREISRGIQKTRFHVLPNGTLSI) form an LRR 11 repeat. 4 N-linked (GlcNAc...) asparagine glycosylation sites follow: asparagine 1676, asparagine 1780, asparagine 1870, and asparagine 1933. 7 disulfide bridges follow: cysteine 1934-cysteine 1987, cysteine 2031-cysteine 2090, cysteine 2134-cysteine 2184, cysteine 2232-cysteine 2284, cysteine 2330-cysteine 2382, cysteine 2425-cysteine 2477, and cysteine 2521-cysteine 2576. N-linked (GlcNAc...) asparagine glycosylation is present at asparagine 2072. N-linked (GlcNAc...) asparagine glycosylation is present at asparagine 2364. Residue tyrosine 2574 is modified to Phosphotyrosine.

In terms of tissue distribution, in the embryo, expressed in the nasal mesenchyme.

It is found in the secreted. Functionally, involved in the control of early migration of neurons expressing gonadotropin-releasing hormone (GNRH neurons). May be involved in the maintenance of osteochondroprogenitor cells pool. This chain is Immunoglobulin superfamily member 10 (Igsf10), found in Mus musculus (Mouse).